A 446-amino-acid polypeptide reads, in one-letter code: Phosphoglucosamine mutase (446 aa).

Residue Ser103 is the Phosphoserine intermediate of the active site. Residues Ser103, Asp242, Asp244, and Asp246 each coordinate Mg(2+). The residue at position 103 (Ser103) is a Phosphoserine.

It belongs to the phosphohexose mutase family. Mg(2+) serves as cofactor. Post-translationally, activated by phosphorylation.

It carries out the reaction alpha-D-glucosamine 1-phosphate = D-glucosamine 6-phosphate. Its function is as follows. Catalyzes the conversion of glucosamine-6-phosphate to glucosamine-1-phosphate. The chain is Phosphoglucosamine mutase from Corynebacterium urealyticum (strain ATCC 43042 / DSM 7109).